The primary structure comprises 568 residues: Protein adenylyltransferase SelO, mitochondrial (568 aa).

ATP contacts are provided by Gly120, Gly122, Arg123, Lys144, Asp156, Gly157, Arg208, and Arg215. The active-site Proton acceptor is Asp287. 2 residues coordinate Mg(2+): Asn288 and Asp297. Position 297 (Asp297) interacts with ATP.

This sequence belongs to the SELO family. The cofactor is Mg(2+). Forms probably one or more intrachain disulfide bridges.

The protein resides in the mitochondrion. It catalyses the reaction L-tyrosyl-[protein] + ATP = O-(5'-adenylyl)-L-tyrosyl-[protein] + diphosphate. Its function is as follows. Catalyzes the transfer of adenosine 5'-monophosphate (AMP) to Tyr residues of target mitochondrial proteins (AMPylation). Involved in redox homeostasis by regulating the cellular response to oxidative stress. Regulates protein S-glutathionylation levels possibly by AMPylation of deglutathionylation enzymes such as glutaredoxins. This is Protein adenylyltransferase SelO, mitochondrial from Schizosaccharomyces pombe (strain 972 / ATCC 24843) (Fission yeast).